The chain runs to 210 residues: Isomeliandiol synthase ISM1 (210 aa).

5 helical membrane-spanning segments follow: residues 17 to 37 (FTLH…TWFI), 50 to 70 (LLCW…YFVF), 107 to 127 (IEGM…YAIV), 135 to 155 (ILQF…FLTA), and 172 to 192 (YYVG…INFW). The 143-residue stretch at 46 to 188 (GDRLLLCWWA…IWIIVPSLIA (143 aa)) folds into the EXPERA domain.

It belongs to the EBP family.

Its subcellular location is the membrane. The catalysed reaction is 7,8-epoxymelianol = isomeliandiol. It functions in the pathway secondary metabolite biosynthesis; terpenoid biosynthesis. Isomerase involved in the biosynthesis of limonoids and quassinoids triterpene natural products such as ailanthone, chaparrinone, glaucarubinone and amarolide, allelopathic degraded triterpene lactones inhibiting the growth of other plants, and possessing antimalarial, antifeedant, insecticidal, anti-inflammatory and anticancer activities. Catalyzes the conversion of 7,8-epoxymelianol to isomeliandiol via skeletal rearrangements. The protein is Isomeliandiol synthase ISM1 of Ailanthus altissima (Tree-of-heaven).